The chain runs to 107 residues: ATP-dependent Clp protease adapter protein ClpS (107 aa).

The protein belongs to the ClpS family. In terms of assembly, binds to the N-terminal domain of the chaperone ClpA.

Its function is as follows. Involved in the modulation of the specificity of the ClpAP-mediated ATP-dependent protein degradation. The sequence is that of ATP-dependent Clp protease adapter protein ClpS from Syntrophus aciditrophicus (strain SB).